We begin with the raw amino-acid sequence, 148 residues long: Translation initiation factor 2 subunit beta (148 aa).

Belongs to the eIF-2-beta/eIF-5 family. In terms of assembly, heterotrimer composed of an alpha, a beta and a gamma chain.

Its function is as follows. eIF-2 functions in the early steps of protein synthesis by forming a ternary complex with GTP and initiator tRNA. The chain is Translation initiation factor 2 subunit beta (eif2b) from Aeropyrum pernix (strain ATCC 700893 / DSM 11879 / JCM 9820 / NBRC 100138 / K1).